The sequence spans 270 residues: Proteasome subunit alpha (270 aa).

Positions 229 to 270 are disordered; the sequence is LLDTEAAGSTPTDAPSDTEDGDSTDGTDRADGTTDSTEETEK. Over residues 244-253 the composition is skewed to acidic residues; that stretch reads SDTEDGDSTD.

It belongs to the peptidase T1A family. The 20S proteasome core is composed of 14 alpha and 14 beta subunits that assemble into four stacked heptameric rings, resulting in a barrel-shaped structure. The two inner rings, each composed of seven catalytic beta subunits, are sandwiched by two outer rings, each composed of seven alpha subunits. The catalytic chamber with the active sites is on the inside of the barrel. Has a gated structure, the ends of the cylinder being occluded by the N-termini of the alpha-subunits. Is capped by the proteasome-associated ATPase, ARC.

It is found in the cytoplasm. The protein operates within protein degradation; proteasomal Pup-dependent pathway. Its activity is regulated as follows. The formation of the proteasomal ATPase ARC-20S proteasome complex, likely via the docking of the C-termini of ARC into the intersubunit pockets in the alpha-rings, may trigger opening of the gate for substrate entry. Interconversion between the open-gate and close-gate conformations leads to a dynamic regulation of the 20S proteasome proteolysis activity. Functionally, component of the proteasome core, a large protease complex with broad specificity involved in protein degradation. The chain is Proteasome subunit alpha from Streptomyces griseus subsp. griseus (strain JCM 4626 / CBS 651.72 / NBRC 13350 / KCC S-0626 / ISP 5235).